A 20-amino-acid polypeptide reads, in one-letter code: Cuticle-degrading protease-like protein (20 aa).

The segment at 1–20 (AIVEQQGAPXGLGRIINKXK) is disordered.

This sequence belongs to the peptidase S8 family.

It is found in the secreted. Capable of breaching the insect cuticle. This is Cuticle-degrading protease-like protein from Metacordyceps chlamydosporia (Nematophagous fungus).